Reading from the N-terminus, the 1257-residue chain is Stromal processing peptidase, chloroplastic (1257 aa).

A chloroplast-targeting transit peptide spans 1–142 (MAASTSTSSL…ASVKRVQLPH (142 aa)). Residue histidine 236 participates in Zn(2+) binding. Glutamate 239 serves as the catalytic Proton acceptor. Histidine 240 is a binding site for Zn(2+). The active site involves glutamate 309. Glutamate 316 lines the Zn(2+) pocket. The tract at residues 1233-1257 (EEAGEGYPGVLPMGRGLSTMTRPTT) is disordered.

This sequence belongs to the peptidase M16 family. It depends on Zn(2+) as a cofactor.

The protein resides in the plastid. The protein localises to the chloroplast stroma. Functionally, cleaves presequences (transit peptides) from chloroplastic protein precursors. Initially recognizes a precursor by binding to the C-terminus of its transit peptide and then removes the transit peptide in a single endoproteolytic step. In a next step, pursues the cleavage of transit peptide to a subfragment form. In Pisum sativum (Garden pea), this protein is Stromal processing peptidase, chloroplastic.